The chain runs to 87 residues: Translation initiation factor IF-1 2 (87 aa).

The S1-like domain maps to 1 to 72 (MAKEELLEMQ…SKGRITFRHI (72 aa)).

This sequence belongs to the IF-1 family. In terms of assembly, component of the 30S ribosomal translation pre-initiation complex which assembles on the 30S ribosome in the order IF-2 and IF-3, IF-1 and N-formylmethionyl-tRNA(fMet); mRNA recruitment can occur at any time during PIC assembly.

The protein localises to the cytoplasm. In terms of biological role, one of the essential components for the initiation of protein synthesis. Stabilizes the binding of IF-2 and IF-3 on the 30S subunit to which N-formylmethionyl-tRNA(fMet) subsequently binds. Helps modulate mRNA selection, yielding the 30S pre-initiation complex (PIC). Upon addition of the 50S ribosomal subunit IF-1, IF-2 and IF-3 are released leaving the mature 70S translation initiation complex. The polypeptide is Translation initiation factor IF-1 2 (Dechloromonas aromatica (strain RCB)).